Reading from the N-terminus, the 131-residue chain is Phosphoribosyl-AMP cyclohydrolase (131 aa).

A Mg(2+)-binding site is contributed by aspartate 82. Cysteine 83 is a Zn(2+) binding site. Aspartate 84 and aspartate 86 together coordinate Mg(2+). 2 residues coordinate Zn(2+): cysteine 99 and cysteine 106.

This sequence belongs to the PRA-CH family. As to quaternary structure, homodimer. The cofactor is Mg(2+). Zn(2+) serves as cofactor.

It localises to the cytoplasm. It carries out the reaction 1-(5-phospho-beta-D-ribosyl)-5'-AMP + H2O = 1-(5-phospho-beta-D-ribosyl)-5-[(5-phospho-beta-D-ribosylamino)methylideneamino]imidazole-4-carboxamide. It participates in amino-acid biosynthesis; L-histidine biosynthesis; L-histidine from 5-phospho-alpha-D-ribose 1-diphosphate: step 3/9. Its function is as follows. Catalyzes the hydrolysis of the adenine ring of phosphoribosyl-AMP. The chain is Phosphoribosyl-AMP cyclohydrolase from Methanospirillum hungatei JF-1 (strain ATCC 27890 / DSM 864 / NBRC 100397 / JF-1).